Here is a 623-residue protein sequence, read N- to C-terminus: Protein skinhead-1 (623 aa).

4 disordered regions span residues 1–29 (MGGS…FSSV), 158–184 (TEHP…YEYS), 421–451 (YQST…GSVT), and 467–557 (QRHS…LASD). S164 is modified (phosphoserine; by pmk-1). Positions 173–184 (ERPTTSSRYEYS) are enriched in polar residues. The residue at position 430 (S430) is a Phosphoserine; by pmk-1. Low complexity-rich tracts occupy residues 435–449 (GSSG…SPGS), 472–498 (SDCT…ESST), and 511–529 (PSSG…SQSS). The tract at residues 540-623 (SGQRKRGRQS…DRHDKMSHYI (84 aa)) is basic motif.

The protein belongs to the bZIP family. Skn1 subfamily. As to quaternary structure, monomer. Interacts with GATA factor elt-3; interaction may enhance transcriptional activation of target genes. In terms of assembly, interacts with pgma-5. Interacts with transcription factor mxl-3 (via N-terminus). Cleaved by the aspartic protease ddi-1. In terms of tissue distribution, postembryonic intestinal cells.

It is found in the nucleus. The protein resides in the cytoplasm. Its subcellular location is the mitochondrion. Transcription factor. Required to specify the fate of ventral blastomeres in the early embryo, and postembryonically for the development of the intestine. Directly regulates expression of zygotically expressed med-1 and med-2 to direct mesendoderm development. In response to oxidative stress and anoxia, required to up-regulate expression of stl-1 mRNA. Involved in regulating innate immunity, acting downstream of the pmk-1 p38/MAPK pathway and probably also downstream of nipi-3. Required for the up-regulation of phase II detoxification genes, including gcs-1 and several glutathione-S-transferase mRNAs in response to oxidative stress generated during pathogenic bacterial infection. Modulates oxidative stress responses in concert with transcription factors such as hcf-1 and elt-3. Regulates the transcription of genes associated with metabolism in response to changes in nutrient availability. In neurons, involved in mitochondrial fusion and behavioral recovery during reoxygenation. Required for riok-1 mRNA expression in the intestine. Downstream of the let-60/Ras, mek-2 and pmk-1 pathway, positively regulates lifespan probably by preventing transcription of insulin-like peptides such as ins-39. Prevents degeneration of dopaminergic CEP neurons in response to high Al(3+) or Mn(2+) levels, probably by promoting the expression of glutathione-S-transferase gst-1. Its function is as follows. Directed by the ER-associated degradation pathway (ERAD), mediates proteasomal homeostasis by regulating the expression of proteasomal subunits such as rpt-3 to confer resistance to proteasomal dysfunction. The sequence is that of Protein skinhead-1 (skn-1) from Caenorhabditis elegans.